We begin with the raw amino-acid sequence, 535 residues long: Cytochrome P450 monooxygenase BOA7 (535 aa).

Residues 20–37 (SIFLILGFFVLAAILIAW) traverse the membrane as a helical segment. N-linked (GlcNAc...) asparagine glycans are attached at residues asparagine 65, asparagine 148, asparagine 180, and asparagine 420. Residue cysteine 478 participates in heme binding.

It belongs to the cytochrome P450 family. The cofactor is heme.

Its subcellular location is the membrane. It participates in polyketide biosynthesis. Its function is as follows. Cytochrome P450 monooxygenase; part of the gene cluster B that mediates the biosynthesis of botcinic acid and its botcinin derivatives, acetate-derived polyketides that contribute to virulence when combined with the sesquiterpene botrydial. Botcinic acid and its derivatives have been shown to induce chlorosis and necrosis during host plant infection, but also have antifungal activities. Two polyketide synthases, BOA6 and BOA9, are involved in the biosynthesis of botcinins. BOA6 mediates the formation of the per-methylated tetraketide core by condensation of four units of malonyl-CoA with one unit of acetyl-CoA, which would be methylated in activated methylene groups to yield a bicyclic acid intermediate that could then either be converted to botrylactone derivatives or lose the starter acetate unit through a retro-Claisen type C-C bond cleavage to yield botcinin derivatives. The second polyketide synthase, BOA9, is probably required for the biosynthesis of the tetraketide side chain of botcinins. The methyltransferase (MT) domain within BOA6 is probably responsible for the incorporation of four methyl groups. The trans-enoyl reductase BOA5 might take over the enoyl reductase function of BOA6 that misses an ER domain. The monooxygenases BOA2, BOA3 and BOA4 might be involved in further hydroxylations at C4, C5 and C8, whereas BOA7, close to BOA9, could potentially be involved in the hydroxylation at C4 in the side chain of botcinins. This chain is Cytochrome P450 monooxygenase BOA7, found in Botryotinia fuckeliana (strain B05.10) (Noble rot fungus).